The chain runs to 481 residues: Coniferyl aldehyde dehydrogenase (481 aa).

Active-site residues include Glu221 and Cys255.

It belongs to the aldehyde dehydrogenase family. In terms of assembly, homodimer.

It carries out the reaction (E)-coniferaldehyde + NADP(+) + H2O = (E)-ferulate + NADPH + 2 H(+). The catalysed reaction is (E)-coniferaldehyde + NAD(+) + H2O = (E)-ferulate + NADH + 2 H(+). Functionally, catalyzes the NAD(+)-dependent oxidation of coniferyl aldehyde to ferulic acid and which is induced during growth with eugenol as the carbon source. This is Coniferyl aldehyde dehydrogenase (calB) from Pseudomonas sp. (strain HR199 / DSM 7063).